Reading from the N-terminus, the 157-residue chain is DNA gyrase inhibitor 2 (157 aa).

It belongs to the DNA gyrase inhibitor family. Interacts with DNA gyrase.

It is found in the cytoplasm. In terms of biological role, inhibits the supercoiling activity of DNA gyrase. Acts by inhibiting DNA gyrase at an early step, prior to (or at the step of) binding of DNA by the gyrase. It protects cells against toxins that target DNA gyrase, by inhibiting activity of these toxins and reducing the formation of lethal double-strand breaks in the cell. This Dickeya dadantii (strain 3937) (Erwinia chrysanthemi (strain 3937)) protein is DNA gyrase inhibitor 2.